The sequence spans 250 residues: Indole-3-glycerol phosphate synthase (250 aa).

This sequence belongs to the TrpC family.

The enzyme catalyses 1-(2-carboxyphenylamino)-1-deoxy-D-ribulose 5-phosphate + H(+) = (1S,2R)-1-C-(indol-3-yl)glycerol 3-phosphate + CO2 + H2O. It functions in the pathway amino-acid biosynthesis; L-tryptophan biosynthesis; L-tryptophan from chorismate: step 4/5. This Picrophilus torridus (strain ATCC 700027 / DSM 9790 / JCM 10055 / NBRC 100828 / KAW 2/3) protein is Indole-3-glycerol phosphate synthase.